Reading from the N-terminus, the 432-residue chain is MQLLTIGINHHTAPVALRERVAFPLEQIKPALVTFKNVFLGPQAPNTPEAAILSTCNRTELYCATDDRAAREGAVRWLSEYHRIPVDELAPHVYALPQSEAVRHAFRVASGLDSMVLGETQILGQMKDAVRTATEAGALGTYLNQLFQRTFAVAKEVRGTTEIGTQSVSMAAAAVRLAQRIFEKVSDQRVLFIGAGEMIELCATHFAAQGPRELVVANRTAERGQRLAERFNGRAMPLADLPTRMHEFDIIVSCTASTLPIIGLGAVERAVKARRHRPIFMVDLAVPRDIEPEVGKLKDVFLYTVDDLGAIVREGNASRQAAVAQAEAIIETRVQNFMQWLDTRSVVPVIRHMHTQADALRRAEVDKAQKLLARGDDPAAVLEALSQALTNKLIHGPTSALNRVNGADRDSLIDLMRGFYQHAPRSNDQSGH.

Substrate-binding positions include 55–58 (TCNR), serine 114, 119–121 (ETQ), and glutamine 125. The active-site Nucleophile is cysteine 56. 194–199 (GAGEMI) lines the NADP(+) pocket.

The protein belongs to the glutamyl-tRNA reductase family. In terms of assembly, homodimer.

It catalyses the reaction (S)-4-amino-5-oxopentanoate + tRNA(Glu) + NADP(+) = L-glutamyl-tRNA(Glu) + NADPH + H(+). The protein operates within porphyrin-containing compound metabolism; protoporphyrin-IX biosynthesis; 5-aminolevulinate from L-glutamyl-tRNA(Glu): step 1/2. Its function is as follows. Catalyzes the NADPH-dependent reduction of glutamyl-tRNA(Glu) to glutamate 1-semialdehyde (GSA). This is Glutamyl-tRNA reductase from Burkholderia lata (strain ATCC 17760 / DSM 23089 / LMG 22485 / NCIMB 9086 / R18194 / 383).